The sequence spans 188 residues: Peptidyl-tRNA hydrolase (188 aa).

Tyr-14 lines the tRNA pocket. Residue His-19 is the Proton acceptor of the active site. Residues Tyr-64, Asn-66, and Asn-112 each contribute to the tRNA site.

The protein belongs to the PTH family. In terms of assembly, monomer.

The protein resides in the cytoplasm. It carries out the reaction an N-acyl-L-alpha-aminoacyl-tRNA + H2O = an N-acyl-L-amino acid + a tRNA + H(+). Its function is as follows. Hydrolyzes ribosome-free peptidyl-tRNAs (with 1 or more amino acids incorporated), which drop off the ribosome during protein synthesis, or as a result of ribosome stalling. Functionally, catalyzes the release of premature peptidyl moieties from peptidyl-tRNA molecules trapped in stalled 50S ribosomal subunits, and thus maintains levels of free tRNAs and 50S ribosomes. This Bacillus pumilus (strain SAFR-032) protein is Peptidyl-tRNA hydrolase.